The primary structure comprises 446 residues: Keratin, type I cytoskeletal 25 (446 aa).

The interval 1-20 (MSLRLSSGSKRSYARPSTGS) is disordered. The head stretch occupies residues 1–74 (MSLRLSSGSK…VNEGGLLSGN (74 aa)). The segment at 75–110 (EKVTMQNLNDRLASYLDNVQALQEANADLEQKIKGW) is coil 1A. Residues 75–390 (EKVTMQNLND…LLIGGDEGAC (316 aa)) form the IF rod domain. The tract at residues 111–132 (YEKFGPGSCRGLDHDYSRYFPI) is linker 1. Residues 133–224 (IDDLKNQIIT…KNHKEEMQAL (92 aa)) are coil 1B. Residues 225-247 (QCAAGGNVNVEMNAAPGVDLTVL) form a linker 12 region. A coil 2 region spans residues 248 to 386 (LNNMRAEYEA…ETYCLLIGGD (139 aa)). Positions 387–446 (EGACKSSSYKSKDYTSGNAGNQSKDSPKAIVVKKVLEEVDQRSKILTTRLHSLEEKSQSN) are tail. The disordered stretch occupies residues 394 to 413 (SYKSKDYTSGNAGNQSKDSP). Over residues 400–410 (YTSGNAGNQSK) the composition is skewed to polar residues. Ser-438 carries the post-translational modification Phosphoserine.

It belongs to the intermediate filament family. As to quaternary structure, heterodimer of a type I and a type II keratin. Heterodimer with type II keratin KRT5 leading to the formation of keratin intermediate filament (KIF) network. Interacts with KRT6A to form filaments.

It is found in the cytoplasm. In terms of biological role, essential for the proper assembly of type I and type II keratin protein complexes and formation of keratin intermediate filaments in the inner root sheath (irs). Plays a role in the cytoskeleton organization. The sequence is that of Keratin, type I cytoskeletal 25 from Rattus norvegicus (Rat).